The chain runs to 699 residues: Proline-rich receptor-like protein kinase PERK7 (699 aa).

The segment at 1–167 (MAEGQSPENS…TSNSGSNSSS (167 aa)) is disordered. The Extracellular portion of the chain corresponds to 1-172 (MAEGQSPENS…SNSSSNDGLN (172 aa)). 2 stretches are compositionally biased toward pro residues: residues 9–23 (NSPPAPPPPSPPSPP) and 43–68 (SPPPPSSPDIAPPPQQQQESPPPPLP). Asn-70 carries N-linked (GlcNAc...) asparagine glycosylation. Positions 100–121 (PPQQSDNNGNKGNNNENNKGND) are enriched in low complexity. N-linked (GlcNAc...) asparagine glycosylation occurs at Asn-131. Positions 148 to 158 (HSQPRSLAPPT) are enriched in polar residues. Asn-164 carries N-linked (GlcNAc...) asparagine glycosylation. Residues 173–193 (IGAVIGLVAAAGILFIVMILL) form a helical membrane-spanning segment. Residues 194-699 (CVCCFRKKKK…SKTTTTNRGI (506 aa)) lie on the Cytoplasmic side of the membrane. At Thr-325 the chain carries Phosphothreonine. A Protein kinase domain is found at 336 to 615 (FSKDRLLGQG…VRTLEGDASL (280 aa)). ATP contacts are provided by residues 342-350 (LGQGGFGYV) and Lys-364. A Phosphotyrosine modification is found at Tyr-410. The Proton acceptor role is filled by Asp-461. A phosphoserine mark is found at Ser-465 and Ser-494. 2 positions are modified to phosphothreonine: Thr-495 and Thr-500. A Phosphotyrosine modification is found at Tyr-508. Disordered stretches follow at residues 609-639 (LEGDASLDDLDDGVKPKQSSSGGEGSSDYEM) and 658-699 (DYGA…NRGI). The segment covering 687 to 699 (GSTSKTTTTNRGI) has biased composition (polar residues).

This sequence belongs to the protein kinase superfamily. Ser/Thr protein kinase family. In terms of tissue distribution, mostly expressed in flower buds.

Its subcellular location is the cell membrane. It carries out the reaction L-seryl-[protein] + ATP = O-phospho-L-seryl-[protein] + ADP + H(+). The catalysed reaction is L-threonyl-[protein] + ATP = O-phospho-L-threonyl-[protein] + ADP + H(+). This chain is Proline-rich receptor-like protein kinase PERK7 (PERK7), found in Arabidopsis thaliana (Mouse-ear cress).